The following is a 1391-amino-acid chain: DNA-directed RNA polymerase subunit beta'' (1391 aa).

The Zn(2+) site is built by cysteine 224, cysteine 295, cysteine 302, and cysteine 305.

It belongs to the RNA polymerase beta' chain family. RpoC2 subfamily. In terms of assembly, in plastids the minimal PEP RNA polymerase catalytic core is composed of four subunits: alpha, beta, beta', and beta''. When a (nuclear-encoded) sigma factor is associated with the core the holoenzyme is formed, which can initiate transcription. The cofactor is Zn(2+).

It is found in the plastid. The protein resides in the chloroplast. It carries out the reaction RNA(n) + a ribonucleoside 5'-triphosphate = RNA(n+1) + diphosphate. In terms of biological role, DNA-dependent RNA polymerase catalyzes the transcription of DNA into RNA using the four ribonucleoside triphosphates as substrates. The chain is DNA-directed RNA polymerase subunit beta'' from Buxus microphylla (Littleleaf boxwood).